Here is a 427-residue protein sequence, read N- to C-terminus: Ribosomal protein uS12 methylthiotransferase RimO (427 aa).

In terms of domain architecture, MTTase N-terminal spans 1–116 (MNFYVDVLGC…IAENIGKESI (116 aa)). [4Fe-4S] cluster is bound by residues Cys-10, Cys-46, Cys-79, Cys-145, Cys-149, and Cys-152. The Radical SAM core domain maps to 131-360 (VDEKQYAYVK…MEEQSKISFE (230 aa)). A TRAM domain is found at 363–426 (EKMVGKTFKV…VYDLEGKIVE (64 aa)).

Belongs to the methylthiotransferase family. RimO subfamily. [4Fe-4S] cluster serves as cofactor.

The protein resides in the cytoplasm. The enzyme catalyses L-aspartate(89)-[ribosomal protein uS12]-hydrogen + (sulfur carrier)-SH + AH2 + 2 S-adenosyl-L-methionine = 3-methylsulfanyl-L-aspartate(89)-[ribosomal protein uS12]-hydrogen + (sulfur carrier)-H + 5'-deoxyadenosine + L-methionine + A + S-adenosyl-L-homocysteine + 2 H(+). Catalyzes the methylthiolation of an aspartic acid residue of ribosomal protein uS12. This chain is Ribosomal protein uS12 methylthiotransferase RimO, found in Thermosipho africanus (strain TCF52B).